The sequence spans 107 residues: uncharacterized protein (107 aa).

Residues 86-107 are disordered; sequence KRAETARLPAATPQKRTGPARG.

This is an uncharacterized protein from Saccharomyces cerevisiae (strain ATCC 204508 / S288c) (Baker's yeast).